Consider the following 117-residue polypeptide: Large ribosomal subunit protein bL19 (117 aa).

Belongs to the bacterial ribosomal protein bL19 family.

This protein is located at the 30S-50S ribosomal subunit interface and may play a role in the structure and function of the aminoacyl-tRNA binding site. The chain is Large ribosomal subunit protein bL19 from Aliivibrio salmonicida (strain LFI1238) (Vibrio salmonicida (strain LFI1238)).